Consider the following 498-residue polypeptide: MRINPTTSGSGVSTLEKKNLGRVVQIIGPVLDVAFPPGKMPNIYNALVVQGRDSVGQPINVACEVQQLLGNNRVRAVAMSATDGLTRGMEVIDKGAPISVPVGGATLGRIFNVLGEPVDNLGPVDTSTMSPIHRSAPAFIQLDTKLSIFETGIKVVDLLAPYRRGGKIGLFGGAGVGKTVLIMELINNIAKAHGGVSVFGGVGERTREGNDLYMEMKESGVINEENIAESKVALVYGQMNEPPGARMRVGLTALTMAEYFRDVNEQDVLLFIDNIFRFVQAGSEVSALLGRMPSAVGYQPTLSTEMGSLQERITSTKEGSITSIQAVYVPADDLTDPAPATTFAHLDATTVLSRGLAAKGIYPAVDPLDSTSTMLQPRIVGEEHYETAQRVKQTLQRYKELQDIIAILGLDELSEEDRLLVARARKIERFLSQPFFVAEVFTGSPGKYVGLAETIRGFQLILSGELDGLPEQAFYLVGNIDEATAKAMNLEMESNLKK.

172 to 179 (GGAGVGKT) serves as a coordination point for ATP.

The protein belongs to the ATPase alpha/beta chains family. F-type ATPases have 2 components, CF(1) - the catalytic core - and CF(0) - the membrane proton channel. CF(1) has five subunits: alpha(3), beta(3), gamma(1), delta(1), epsilon(1). CF(0) has four main subunits: a(1), b(1), b'(1) and c(9-12).

It localises to the plastid. The protein localises to the chloroplast thylakoid membrane. The enzyme catalyses ATP + H2O + 4 H(+)(in) = ADP + phosphate + 5 H(+)(out). Produces ATP from ADP in the presence of a proton gradient across the membrane. The catalytic sites are hosted primarily by the beta subunits. The sequence is that of ATP synthase subunit beta, chloroplastic from Atropa belladonna (Belladonna).